A 323-amino-acid chain; its full sequence is Acetyl esterase (323 aa).

The Involved in the stabilization of the negatively charged intermediate by the formation of the oxyanion hole signature appears at 91-93 (HGG). Active-site residues include serine 165, aspartate 262, and histidine 292.

It belongs to the 'GDXG' lipolytic enzyme family. Homodimer. Interacts with MalT and MelA.

The protein resides in the cytoplasm. In terms of biological role, displays esterase activity towards short chain fatty esters (acyl chain length of up to 8 carbons). Able to hydrolyze triacetylglycerol (triacetin) and tributyrylglycerol (tributyrin), but not trioleylglycerol (triolein) or cholesterol oleate. Negatively regulates MalT activity by antagonizing maltotriose binding. Inhibits MelA galactosidase activity. The chain is Acetyl esterase from Salmonella agona (strain SL483).